The sequence spans 908 residues: Protein translocase subunit SecA (908 aa).

ATP contacts are provided by residues Gln90, 108–112 (GEGKT), and Asp503. The segment covering 846 to 864 (AAAAEAPVAPAPQPAAAAP) has biased composition (low complexity). The tract at residues 846 to 884 (AAAAEAPVAPAPQPAAAAPQPTPELVGAEAGEPDPAAWG) is disordered. Cys892, Cys894, Cys903, and His904 together coordinate Zn(2+).

It belongs to the SecA family. Monomer and homodimer. Part of the essential Sec protein translocation apparatus which comprises SecA, SecYEG and auxiliary proteins SecDF-YajC and YidC. Zn(2+) is required as a cofactor.

Its subcellular location is the cell inner membrane. The protein resides in the cytoplasm. The enzyme catalyses ATP + H2O + cellular proteinSide 1 = ADP + phosphate + cellular proteinSide 2.. Its function is as follows. Part of the Sec protein translocase complex. Interacts with the SecYEG preprotein conducting channel. Has a central role in coupling the hydrolysis of ATP to the transfer of proteins into and across the cell membrane, serving both as a receptor for the preprotein-SecB complex and as an ATP-driven molecular motor driving the stepwise translocation of polypeptide chains across the membrane. The sequence is that of Protein translocase subunit SecA from Cereibacter sphaeroides (strain KD131 / KCTC 12085) (Rhodobacter sphaeroides).